Consider the following 596-residue polypeptide: Transketolase-like protein 1 (596 aa).

Histidine 46 is a binding site for substrate. Residues serine 49 and glycine 94–leucine 96 each bind thiamine diphosphate. Aspartate 126 contacts Mg(2+). Positions 127 and 156 each coordinate thiamine diphosphate. Mg(2+)-binding residues include asparagine 156 and leucine 158. The thiamine diphosphate site is built by lysine 218 and histidine 232. Substrate-binding residues include histidine 232, arginine 292, and serine 319. Residues glutamate 340 and phenylalanine 366 each coordinate thiamine diphosphate. Catalysis depends on glutamate 340, which acts as the Proton donor. 2 residues coordinate substrate: histidine 390 and aspartate 398. Glutamine 402 lines the thiamine diphosphate pocket. Arginine 448 contacts substrate.

Belongs to the transketolase family. As to quaternary structure, homodimer. Mg(2+) is required as a cofactor. Requires Ca(2+) as cofactor. Mn(2+) serves as cofactor. The cofactor is Co(2+). It depends on thiamine diphosphate as a cofactor.

Its subcellular location is the cytoplasm. The catalysed reaction is D-sedoheptulose 7-phosphate + D-glyceraldehyde 3-phosphate = aldehydo-D-ribose 5-phosphate + D-xylulose 5-phosphate. In terms of biological role, catalyzes the transfer of a two-carbon ketol group from a ketose donor to an aldose acceptor, via a covalent intermediate with the cofactor thiamine pyrophosphate. The sequence is that of Transketolase-like protein 1 (TKTL1) from Bos taurus (Bovine).